The chain runs to 334 residues: Catabolite repressor/activator (334 aa).

The region spanning 1-58 (MKLDEIARLAGVSRTTASYVINGKAKQYRVSDKTVEKVMAVVREHNYHPNAVAAGLRA) is the HTH lacI-type domain. The H-T-H motif DNA-binding region spans 3-22 (LDEIARLAGVSRTTASYVIN).

As to quaternary structure, homotetramer.

Its function is as follows. Global transcriptional regulator, which plays an important role in the regulation of carbon metabolism. This is Catabolite repressor/activator (cra) from Escherichia coli O157:H7.